The following is a 337-amino-acid chain: MANRGARHARTEDTENTINYVQCDGLAVMKMVKHCHEESSNMDLAQGALLGLVVDKCLEITNCFPFPKSGDETMDDETYQLTVMRHLRRVNVDHLHVGWYQSSDVGNSLSLALLESQYHYQTSIEESVVVVYDTQKSSRGFLCLKAYRLTPQAIQMYKDSDFTPEAFRTLKVGYESLFAEIPIVIKNSPLTNIMMSELNELLPEDKGHNFLDLGTASVLENHMRSLIERVDELYQESVRYNKYQQVVFKQDTEKHRALAKLAAENAVRTSKGEPTVPEEEVIKQFRPMPVPARLTATITSGQINTHAQHIAQFCSQSLAKLFITEALQNAKETKEIK.

Positions 21 to 153 (VQCDGLAVMK…LKAYRLTPQA (133 aa)) constitute an MPN domain.

The protein belongs to the eIF-3 subunit H family. In terms of assembly, component of the eukaryotic translation initiation factor 3 (eIF-3) complex. The eIF-3 complex interacts with pix. Interacts with mxt.

It is found in the cytoplasm. Functionally, component of the eukaryotic translation initiation factor 3 (eIF-3) complex, which is involved in protein synthesis of a specialized repertoire of mRNAs and, together with other initiation factors, stimulates binding of mRNA and methionyl-tRNAi to the 40S ribosome. The eIF-3 complex specifically targets and initiates translation of a subset of mRNAs involved in cell proliferation. This is Eukaryotic translation initiation factor 3 subunit H from Drosophila grimshawi (Hawaiian fruit fly).